The following is a 199-amino-acid chain: 3-isopropylmalate dehydratase small subunit (199 aa).

The protein belongs to the LeuD family. LeuD type 1 subfamily. Heterodimer of LeuC and LeuD.

It catalyses the reaction (2R,3S)-3-isopropylmalate = (2S)-2-isopropylmalate. The protein operates within amino-acid biosynthesis; L-leucine biosynthesis; L-leucine from 3-methyl-2-oxobutanoate: step 2/4. In terms of biological role, catalyzes the isomerization between 2-isopropylmalate and 3-isopropylmalate, via the formation of 2-isopropylmaleate. This Bacillus pumilus (strain SAFR-032) protein is 3-isopropylmalate dehydratase small subunit.